Here is a 77-residue protein sequence, read N- to C-terminus: Major pilus subunit operon regulatory protein (77 aa).

It to E.coli AfaF and DaaF.

Plays a role in the inhibition of methylation at the GATC1028 site located in the regulatory region upstream of the pabA promoter. May, in conjunction with the Mbf (methylation blocking factor), inhibits deoxyadenosine methylase from methylating the GATC1028 site. The chain is Major pilus subunit operon regulatory protein (papI) from Escherichia coli.